A 524-amino-acid chain; its full sequence is MSRQFTCKSGASNRGFSGCSAVLSGGSSSSYRAGGKGLSGGFGSRSLYSLGGGRSITLNMASGSGKNGGFGFGRNRASGFAGSIFGSVALGPVCPAVCPPGGIHQVTVNESLLAPLNVELDPEIQKVRAQEREQIKALNNKFASFIDKVRFLEQQNQVLQTKWELLQQLDLNNCKNNLEPILEGHISNMRKQLETLSGDRVRLDSELRNVRDVVEDYKKKYEEEINRRTAAENEFVLLKKDVDAAYANKVELQAKVDTMDQDIKFFKCLFEAEMAQIQSHISDMSVILSMDNNRNLDLDSIIDEVRAQYEEIALKSKAEAEALYQTKFQELQLAAGRHGDDLKNTKNEITELTRFIQRLRSEIENAKKQASNLETAIADAEQRGDSALKDARAKLDELEGALHQAKEELARMLREYQELMSLKLALDMEIATYRKLLESEECRMSGEYSSPVSISIISSTSGSGGYGFRPSTVSGGYVANSTSCISGVCSVRGGENRSRGSASDYKDTLTKGSSLSTPSKKGGR.

The interval 1-130 is head; the sequence is MSRQFTCKSG…DPEIQKVRAQ (130 aa). The segment at 131–166 is coil 1A; sequence EREQIKALNNKFASFIDKVRFLEQQNQVLQTKWELL. Residues 131-444 form the IF rod domain; it reads EREQIKALNN…KLLESEECRM (314 aa). The linker 1 stretch occupies residues 167 to 185; the sequence is QQLDLNNCKNNLEPILEGH. Residues 186 to 277 are coil 1B; it reads ISNMRKQLET…CLFEAEMAQI (92 aa). Residues 278–301 form a linker 12 region; it reads QSHISDMSVILSMDNNRNLDLDSI. The segment at 302 to 440 is coil 2; sequence IDEVRAQYEE…ATYRKLLESE (139 aa). The tract at residues 441–524 is tail; that stretch reads ECRMSGEYSS…LSTPSKKGGR (84 aa). The tract at residues 493-524 is disordered; sequence GGENRSRGSASDYKDTLTKGSSLSTPSKKGGR. Residues 494 to 509 show a composition bias toward basic and acidic residues; the sequence is GENRSRGSASDYKDTL. Residues 510–524 are compositionally biased toward polar residues; the sequence is TKGSSLSTPSKKGGR.

Belongs to the intermediate filament family. As to quaternary structure, heterodimer of a type I and a type II keratin. Associates with KRT16 and/or KRT17. As to expression, specifically expressed in the inner root sheath (IRS) of the hair follicle. Present in Henle and the Huxley layers of the IRS, while expression in the cuticle is unsure (at protein level).

Its subcellular location is the cytoplasm. The protein localises to the cytoskeleton. In terms of biological role, plays a central role in hair formation. Essential component of keratin intermediate filaments in the inner root sheath (IRS) of the hair follicle. The sequence is that of Keratin, type II cytoskeletal 71 (Krt71) from Mus musculus (Mouse).